The following is a 257-amino-acid chain: Chymotrypsin-like protease VLCTLP (257 aa).

A signal peptide spans 1 to 18 (MVLIRVLANLLLLQLSYA). The propeptide occupies 19-24 (QKSSEL). The Peptidase S1 domain occupies 25-248 (VVGGDECNIN…YSDWIQSIIA (224 aa)). Intrachain disulfides connect C31/C162, C49/C65, C97/C255, C141/C209, C173/C188, and C199/C224. The N-linked (GlcNAc...) asparagine glycan is linked to N44. The active-site Charge relay system is the H64. N100 carries N-linked (GlcNAc...) asparagine glycosylation. D109 serves as the catalytic Charge relay system. N-linked (GlcNAc...) asparagine glycosylation is found at N116 and N153. S203 acts as the Charge relay system in catalysis. N250 is a glycosylation site (N-linked (GlcNAc...) asparagine).

Belongs to the peptidase S1 family. Snake venom subfamily. Monomer. Partial deglycosylation has not effect on enzyme activity. Expressed by the venom gland.

It localises to the secreted. Inhibited by PMSF. Functionally, snake venom serine protease with tyrosine-specific chymotrypsin-like activity. Hydrolyzes the N-acetyl-L-tyrosine ethyl ester (ATEE). Has weak fibrinogenolytic activity. Weakly hydrolyzes azocasein, Aalpha-chain (FGA) and more slowly Bbeta-chain (FGB) of fibrinogen. Optimal substrates are angiotensins I and II (AGT). The chain is Chymotrypsin-like protease VLCTLP from Macrovipera lebetinus (Levantine viper).